The following is a 609-amino-acid chain: UvrABC system protein C (609 aa).

In terms of domain architecture, GIY-YIG spans 13 to 91 (HEPGVYRMYD…IKLYQPRYNV (79 aa)). The region spanning 201–236 (QQVLDYLIGKMEQASRNLDFEQAARYRDQIQAVRSV) is the UVR domain.

It belongs to the UvrC family. Interacts with UvrB in an incision complex.

It localises to the cytoplasm. Functionally, the UvrABC repair system catalyzes the recognition and processing of DNA lesions. UvrC both incises the 5' and 3' sides of the lesion. The N-terminal half is responsible for the 3' incision and the C-terminal half is responsible for the 5' incision. The sequence is that of UvrABC system protein C from Haemophilus influenzae (strain 86-028NP).